The chain runs to 199 residues: Recombination protein RecR (199 aa).

The segment at 57 to 72 (CQSCRTFTEETYCPIC) adopts a C4-type zinc-finger fold. Residues 81–176 (SVICVVETPA…AVSRIAHGVP (96 aa)) form the Toprim domain.

The protein belongs to the RecR family.

Functionally, may play a role in DNA repair. It seems to be involved in an RecBC-independent recombinational process of DNA repair. It may act with RecF and RecO. In Shewanella piezotolerans (strain WP3 / JCM 13877), this protein is Recombination protein RecR.